Consider the following 463-residue polypeptide: Chromogranin-A (463 aa).

Residues Met-1 to Ala-18 form the signal peptide. The cysteines at positions 35 and 56 are disulfide-linked. Positions Lys-88 to Leu-440 are disordered. Positions Gln-92–Gln-116 are enriched in low complexity. Position 119 is a phosphoserine (Ser-119). Residues Asp-134–Gln-160 are compositionally biased toward basic and acidic residues. Residues Thr-196–Ser-208 show a composition bias toward polar residues. 3 positions are modified to phosphoserine: Ser-220, Ser-282, and Ser-308. Positions Gly-301–Gln-310 are enriched in basic and acidic residues. Residue Gly-329 is modified to Glycine amide. 2 stretches are compositionally biased toward basic and acidic residues: residues Lys-331 to Glu-340 and Arg-348 to Glu-375. Phosphoserine occurs at positions 350 and 383. Met-384 carries the methionine sulfoxide modification. A compositionally biased stretch (basic and acidic residues) spans Ser-409–Asp-437. Ser-410, Ser-414, and Ser-430 each carry phosphoserine. A glycan (O-linked (Xyl...) (chondroitin sulfate) serine) is linked at Ser-430. The residue at position 438 (Gln-438) is a Pyrrolidone carboxylic acid. The residue at position 444 (Ser-444) is a Phosphoserine.

This sequence belongs to the chromogranin/secretogranin protein family. Self-interacts; self-assembly is promoted in vitro by chondroitin sulfate attachment which occurs at mildly acidic pH conditions. Interacts with SCG3; this interaction is optimal in conditions mimicking the lumenal milieu of the trans-Golgi network, i.e. pH 5.5 and 10 mM Ca(+2). Interacts with ITPR1 in the secretory granules. In terms of processing, O-glycosylated; contains chondroitin sulfate (CS). CS attachment is pH-dependent, being observed at mildly acidic conditions of pH 5 but not at neutral pH, and promotes self-assembly in vitro.

The protein resides in the cytoplasmic vesicle. Its subcellular location is the secretory vesicle. It is found in the neuronal dense core vesicle. The protein localises to the secreted. Its function is as follows. Strongly inhibits glucose induced insulin release from the pancreas. In terms of biological role, inhibits catecholamine release from chromaffin cells and noradrenergic neurons by acting as a non-competitive nicotinic cholinergic antagonist. Can induce mast cell migration, degranulation and production of cytokines and chemokines. Functionally, regulates granule biogenesis in endocrine cells by up-regulating the transcription of protease nexin 1 (SERPINE2) via a cAMP-PKA-SP1 pathway. This leads to inhibition of granule protein degradation in the Golgi complex which in turn promotes granule formation. Pyroglutaminated (pGlu)-serpinin exerts an antiapoptotic effect on cells exposed to oxidative stress. The protein is Chromogranin-A (Chga) of Mus musculus (Mouse).